A 262-amino-acid polypeptide reads, in one-letter code: Thiazole synthase (262 aa).

The Schiff-base intermediate with DXP role is filled by lysine 95. Residues glycine 156, 182–183 (AG), and 204–205 (NT) each bind 1-deoxy-D-xylulose 5-phosphate.

It belongs to the ThiG family. In terms of assembly, homotetramer. Forms heterodimers with either ThiH or ThiS.

The protein localises to the cytoplasm. It catalyses the reaction [ThiS sulfur-carrier protein]-C-terminal-Gly-aminoethanethioate + 2-iminoacetate + 1-deoxy-D-xylulose 5-phosphate = [ThiS sulfur-carrier protein]-C-terminal Gly-Gly + 2-[(2R,5Z)-2-carboxy-4-methylthiazol-5(2H)-ylidene]ethyl phosphate + 2 H2O + H(+). It functions in the pathway cofactor biosynthesis; thiamine diphosphate biosynthesis. In terms of biological role, catalyzes the rearrangement of 1-deoxy-D-xylulose 5-phosphate (DXP) to produce the thiazole phosphate moiety of thiamine. Sulfur is provided by the thiocarboxylate moiety of the carrier protein ThiS. In vitro, sulfur can be provided by H(2)S. The sequence is that of Thiazole synthase from Yersinia enterocolitica serotype O:8 / biotype 1B (strain NCTC 13174 / 8081).